The following is a 281-amino-acid chain: 1-acyl-sn-glycerol-3-phosphate acyltransferase (281 aa).

3 helical membrane passes run 40–60 (IFVC…IMVL), 71–91 (LGNL…GIPI), and 110–130 (ASPI…VGVA). The short motif at 109–114 (HASPID) is the HXXXXD motif element.

Belongs to the 1-acyl-sn-glycerol-3-phosphate acyltransferase family.

Its subcellular location is the membrane. The enzyme catalyses a 1-acyl-sn-glycero-3-phosphate + an acyl-CoA = a 1,2-diacyl-sn-glycero-3-phosphate + CoA. It participates in phospholipid metabolism; CDP-diacylglycerol biosynthesis; CDP-diacylglycerol from sn-glycerol 3-phosphate: step 2/3. Functionally, converts lysophosphatidic acid (LPA) into phosphatidic acid by incorporating acyl moiety at the 2 position. This enzyme uses erucoyl-CoA as an acyl donor. The chain is 1-acyl-sn-glycerol-3-phosphate acyltransferase from Limnanthes alba (White meadowfoam).